We begin with the raw amino-acid sequence, 1429 residues long: Alpha-agarase (1429 aa).

The first 26 residues, 1-26, serve as a signal peptide directing secretion; the sequence is MFKTKRSLLNSSIAISFAVLGVQAQA. 2 consecutive CBM6 domains span residues 29–161 and 211–345; these read LELQ…FRLT and FVIQ…LTFT. 2 disordered regions span residues 349–400 and 474–495; these read SDGG…DGVS and NTPA…GEPG. Residues 369-378 are compositionally biased toward polar residues; it reads SSDSCPNTPT. The region spanning 490-638 is the PA14 domain; the sequence is NGGEPGDSYY…GGTNFVHPSN (149 aa). The CBM6 3 domain maps to 662-793; it reads IYIQLEDFDE…QWSGDLVRLA (132 aa).

This sequence belongs to the glycosyl hydrolase 96 family. Homodimer. Ca(2+) serves as cofactor.

The enzyme catalyses Endohydrolysis of 1,3-alpha-L-galactosidic linkages in agarose, yielding agarotetraose as the major product.. In terms of biological role, alpha-agarase. Does not hydrolyze agarotetraose, agarohexaose, kappa-carrageenan, iota-carrageenan or lambda-carrageenan. The polypeptide is Alpha-agarase (Alteromonas agarilytica).